Reading from the N-terminus, the 446-residue chain is UDP-N-acetylmuramate--L-alanine ligase (446 aa).

Residue 122-128 (GTHGKTT) participates in ATP binding.

It belongs to the MurCDEF family.

The protein localises to the cytoplasm. The enzyme catalyses UDP-N-acetyl-alpha-D-muramate + L-alanine + ATP = UDP-N-acetyl-alpha-D-muramoyl-L-alanine + ADP + phosphate + H(+). It functions in the pathway cell wall biogenesis; peptidoglycan biosynthesis. Functionally, cell wall formation. The protein is UDP-N-acetylmuramate--L-alanine ligase of Nocardioides sp. (strain ATCC BAA-499 / JS614).